A 190-amino-acid chain; its full sequence is CASP-like protein 5A3 (190 aa).

Composition is skewed to low complexity over residues 1 to 12 and 20 to 31; these read MRASRPAVHPVE and AAAEGPEAQVEG. Residues 1–31 are disordered; that stretch reads MRASRPAVHPVEAAPPPPAAAAEGPEAQVEG. Residues 1-50 lie on the Cytoplasmic side of the membrane; that stretch reads MRASRPAVHPVEAAPPPPAAAAEGPEAQVEGAAHPRGVRMKDPPGAPGTP. The chain crosses the membrane as a helical span at residues 51–71; sequence AGLGLRLAQAFFAAAALAVMA. Residues 72-81 lie on the Extracellular side of the membrane; that stretch reads STNDFPSVSA. The helical transmembrane segment at 82–102 threads the bilayer; it reads FSYLVAAAILQCLWSLLLAFV. Over 103-126 the chain is Cytoplasmic; it reads DIYALLVKRSLRNARAVCIFTIGD. The helical transmembrane segment at 127 to 147 threads the bilayer; it reads GITGTITLGAACASAGITVLI. Topologically, residues 148–164 are extracellular; the sequence is GNDLNICAENHCASFET. The helical transmembrane segment at 165–185 threads the bilayer; that stretch reads ATALAFISWFALAPSCILNFW. The Cytoplasmic portion of the chain corresponds to 186–190; sequence SMASR.

Belongs to the Casparian strip membrane proteins (CASP) family. In terms of assembly, homodimer and heterodimers.

The protein localises to the cell membrane. The chain is CASP-like protein 5A3 from Zea mays (Maize).